A 683-amino-acid polypeptide reads, in one-letter code: Dixin (683 aa).

Leu-2 carries N-myristoyl glycine lipidation. A Calponin-homology (CH) domain is found at 20-127 (EQQLQAYVAW…LVLALAAHFK (108 aa)). Positions 127–300 (KPGSSRTVNQ…LEKEMEEAKK (174 aa)) are actin-binding. Ser-186 is subject to Phosphoserine. A disordered region spans residues 207–235 (GQQRSPSESSCSSLTSPSPIHSAKSESII). Positions 211-228 (SPSESSCSSLTSPSPIHS) are enriched in low complexity. Ser-231 carries the post-translational modification Phosphoserine. Positions 279–452 (SWEEQLLEQQ…EALRKLSDVS (174 aa)) form a coiled coil. Polar residues predominate over residues 482–492 (NYNSHNSQSNG). 2 disordered regions span residues 482-509 (NYNSHNSQSNGFLLPTAGKGATSVSNRG) and 556-594 (TQKKQERKVRVKSPRTQVGSEYRESWPPNSKLPHSQSSP). A Phosphoserine modification is found at Ser-590. Positions 600–680 (CTKVLYFTDR…KIVAWVEEDH (81 aa)) constitute a DIX domain.

Belongs to the DIXDC1 family. In terms of assembly, isoform 1 but not isoform 2 binds filamentous actin. Interacts with the complex composed of DVL2 and Rac. Interacts with AXIN1; competes with MAP3K1. Interacts with MAP3K4 preventing MAP3K4 interaction with AXIN1. Directly interacts (via DIX domain) with DVL2 (via DIX domain). Interacts with gamma-tubulin. Post-translationally, phosphorylated on tyrosine and serine residues. Polyubiquitinated, leading to its proteasomal degradation. WNT3A signaling increases DIXDC1 protein levels by inhibiting its ubiquitination and subsequent degradation. In terms of tissue distribution, ubiquitously expressed with higher expression in cardiac and skeletal muscles.

Its subcellular location is the cell junction. It is found in the focal adhesion. The protein localises to the cytoplasm. It localises to the cytoskeleton. The protein resides in the stress fiber. In terms of biological role, positive effector of the Wnt signaling pathway; activates WNT3A signaling via DVL2. Regulates JNK activation by AXIN1 and DVL2. The protein is Dixin (DIXDC1) of Homo sapiens (Human).